Here is a 118-residue protein sequence, read N- to C-terminus: uncharacterized protein (118 aa).

Residues methionine 1–arginine 118 are disordered. The segment covering arginine 13–glutamate 28 has biased composition (low complexity). The segment covering threonine 29 to glutamate 49 has biased composition (basic and acidic residues).

This is an uncharacterized protein from Homo sapiens (Human).